A 121-amino-acid chain; its full sequence is Large ribosomal subunit protein bL19 (121 aa).

It belongs to the bacterial ribosomal protein bL19 family.

Its function is as follows. This protein is located at the 30S-50S ribosomal subunit interface and may play a role in the structure and function of the aminoacyl-tRNA binding site. The protein is Large ribosomal subunit protein bL19 of Bifidobacterium adolescentis (strain ATCC 15703 / DSM 20083 / NCTC 11814 / E194a).